The primary structure comprises 132 residues: Fatty acid-binding protein, intestinal (132 aa).

Ala-2 is modified (N-acetylalanine). Residues Trp-83 and Arg-107 each contribute to the hexadecanoate site. Positions 83 and 107 each coordinate tetradecanoate.

Belongs to the calycin superfamily. Fatty-acid binding protein (FABP) family.

Its subcellular location is the cytoplasm. Functionally, FABPs are thought to play a role in the intracellular transport of long-chain fatty acids and their acyl-CoA esters. FABP2 is probably involved in triglyceride-rich lipoprotein synthesis. Binds saturated long-chain fatty acids with a high affinity, but binds with a lower affinity to unsaturated long-chain fatty acids. FABP2 may also help maintain energy homeostasis by functioning as a lipid sensor. The chain is Fatty acid-binding protein, intestinal (FABP2) from Sus scrofa (Pig).